Reading from the N-terminus, the 291-residue chain is uncharacterized protein (291 aa).

Disordered regions lie at residues 29 to 50 (SEKPVGAPPASQIPGLSDLRDS) and 168 to 291 (RKVK…AELK). Position 50 is a phosphoserine (Ser50). 2 stretches are compositionally biased toward polar residues: residues 176–186 (NSKNPSKTGTP) and 205–217 (QKNSSPTNFSKLI). Residues 221–237 (YKDEWLQQQKAEADRRT) are compositionally biased toward basic and acidic residues. Over residues 280-291 (SSPSESTPAELK) the composition is skewed to polar residues.

This is an uncharacterized protein from Mus musculus (Mouse).